Reading from the N-terminus, the 197-residue chain is Imidazoleglycerol-phosphate dehydratase (197 aa).

It belongs to the imidazoleglycerol-phosphate dehydratase family.

The protein localises to the cytoplasm. It carries out the reaction D-erythro-1-(imidazol-4-yl)glycerol 3-phosphate = 3-(imidazol-4-yl)-2-oxopropyl phosphate + H2O. It participates in amino-acid biosynthesis; L-histidine biosynthesis; L-histidine from 5-phospho-alpha-D-ribose 1-diphosphate: step 6/9. This Stutzerimonas stutzeri (strain A1501) (Pseudomonas stutzeri) protein is Imidazoleglycerol-phosphate dehydratase.